Here is a 451-residue protein sequence, read N- to C-terminus: Phenolic glucoside malonyltransferase 2 (451 aa).

The Proton acceptor role is filled by His-165. Residues 165–169 (HAVLD) carry the HXXXD motif motif. Malonyl-CoA-binding positions include His-270 and 272-273 (ST). Asp-395 acts as the Proton acceptor in catalysis. Residues 395–399 (DFGWG) carry the DFGWG motif motif.

This sequence belongs to the plant acyltransferase family. Phenolic glucoside malonyltransferase subfamily.

The enzyme catalyses a flavonol 7-O-beta-D-glucoside + malonyl-CoA = a flavonol 7-O-(6-O-malonyl-beta-D-glucoside) + CoA. Functionally, malonyltransferase acting on xenobiotic glucosides. Has activity toward 2-Naphthol glucoside (2NAG), 1-Naphthol glucoside (1NAG), kaempferol 7-O-glucoside, hydroxycoumarin glucosides and phenol-glucosides, but not toward kaempferol 3-O-glucoside or daidzin. Prefers phenol glucosides rather than naphtol glucosides. In vivo, seems to be involved in the malonylation of 4-methylumbelliferone glucoside or 4-nitrophenyl glucoside while PMAT1 would be involved in the malonylation of 2-Naphthol glucoside. This Arabidopsis thaliana (Mouse-ear cress) protein is Phenolic glucoside malonyltransferase 2 (PMAT2).